A 395-amino-acid polypeptide reads, in one-letter code: L-rhamnonate dehydratase (395 aa).

His-23 and Arg-49 together coordinate substrate. The Mg(2+) site is built by Asp-215, Glu-241, and Glu-269. The active-site Proton acceptor is the His-319. Glu-339 is a binding site for substrate.

It belongs to the mandelate racemase/muconate lactonizing enzyme family. RhamD subfamily. As to quaternary structure, homooctamer; tetramer of dimers. The cofactor is Mg(2+).

The enzyme catalyses L-rhamnonate = 2-dehydro-3-deoxy-L-rhamnonate + H2O. Its function is as follows. Catalyzes the dehydration of L-rhamnonate to 2-keto-3-deoxy-L-rhamnonate (KDR). The protein is L-rhamnonate dehydratase (rhmD) of Polaromonas sp. (strain JS666 / ATCC BAA-500).